The chain runs to 86 residues: MRLFLSLPVLVVALLMILEGPGPAQGAPEAVDTSSGLDKLKEFGTTLEDKVREFFNRVKESDIPAKTRNWFSETLQKVKEKLRIES.

The first 26 residues, 1 to 26, serve as a signal peptide directing secretion; the sequence is MRLFLSLPVLVVALLMILEGPGPAQG.

It belongs to the apolipoprotein C1 family.

Its subcellular location is the secreted. Inhibitor of lipoprotein binding to the low density lipoprotein (LDL) receptor, LDL receptor-related protein, and very low density lipoprotein (VLDL) receptor. Associates with high density lipoproteins (HDL) and the triacylglycerol-rich lipoproteins in the plasma and makes up about 10% of the protein of the VLDL and 2% of that of HDL. Appears to interfere directly with fatty acid uptake and is also the major plasma inhibitor of cholesteryl ester transfer protein (CETP). Binds free fatty acids and reduces their intracellular esterification. Modulates the interaction of APOE with beta-migrating VLDL and inhibits binding of beta-VLDL to the LDL receptor-related protein. The chain is Apolipoprotein C-I (APOC1) from Aotus nancymaae (Ma's night monkey).